The chain runs to 329 residues: Olfactory receptor 5AL1 (329 aa).

The Extracellular portion of the chain corresponds to 1 to 44; it reads MCALKGFLEENFYTYSVAKGNHSTVYEFILLGLTDNAELQVTLF. The N-linked (GlcNAc...) asparagine glycan is linked to Asn21. The chain crosses the membrane as a helical span at residues 45–65; sequence GIFLVVYLASFMGNFGLIMLI. The Cytoplasmic segment spans residues 66 to 73; the sequence is QISPQLHT. A helical membrane pass occupies residues 74–94; sequence PMYFFLSHLAFVDFSFTSSVA. Topologically, residues 95-113 are extracellular; the sequence is PNTLVNFLCEVKSITFYAC. Cysteines 113 and 205 form a disulfide. A helical transmembrane segment spans residues 114-134; the sequence is AIQVCCFITFVVCELYLLSIM. Over 135 to 157 the chain is Cytoplasmic; sequence AYDRYVAICNPLLYVILIPRKLC. The helical transmembrane segment at 158–178 threads the bilayer; the sequence is IKLIASTYVYGFTVGLVQTVA. Topologically, residues 179-220 are extracellular; the sequence is TSYLSFCDSNVINHFYHDDVPLVALACSDTHVKELMLLIIAG. Residues 221–241 form a helical membrane-spanning segment; the sequence is FNTLCSLVIVLISYGFIFFAI. The Cytoplasmic segment spans residues 242–253; the sequence is LRIHSAEGRQKA. A helical membrane pass occupies residues 254-274; it reads FSTSASHLTSITIFYGTIIFM. At 275 to 287 the chain is on the extracellular side; it reads YPQPKSSHSLNMD. The helical transmembrane segment at 288-308 threads the bilayer; it reads KVASVFNVVVIPTLNPLIYSL. The Cytoplasmic portion of the chain corresponds to 309-329; it reads RNQEVKNALKRIIEKLCLAVK.

The protein belongs to the G-protein coupled receptor 1 family.

It is found in the cell membrane. Odorant receptor. The chain is Olfactory receptor 5AL1 (OR5AL1) from Homo sapiens (Human).